We begin with the raw amino-acid sequence, 490 residues long: Selenium-binding protein 1 (490 aa).

Ala-2 is subject to N-acetylalanine. Cys-21 and Cys-22 together coordinate selenite.

Belongs to the selenium-binding protein family. In terms of assembly, interacts with GRXS14 and GRXS16. Interacts with DALL3. In terms of tissue distribution, expressed in seedlings, roots, leaves, stems and flowers.

Its function is as follows. Binds cadmium and mediates lower sensitivity to stress requiring glutathione (GSH) for tolerance (e.g. cadmium, selenate, and hydrogen peroxide excess). Probably helps to detoxify cadmium potentially through direct binding. Binds selenium, cadmium, zinc and nickel in vitro. This Arabidopsis thaliana (Mouse-ear cress) protein is Selenium-binding protein 1.